The primary structure comprises 121 residues: MFDTASLKYDANGLIPAIAQDHQSGEVLMMAWMNAEAVRQTLDSGRVTYWSRSRQGFWVKGESSGHVQKLVELRVDCDRDCLLLLVDQTGPACHTNRRSCFYTAIREGQEVVIMAPQNPSA.

Position 76 (aspartate 76) interacts with Mg(2+). Cysteine 77 is a Zn(2+) binding site. Positions 78 and 80 each coordinate Mg(2+). The Zn(2+) site is built by cysteine 93 and cysteine 100.

Belongs to the PRA-CH family. As to quaternary structure, homodimer. Requires Mg(2+) as cofactor. The cofactor is Zn(2+).

It localises to the cytoplasm. It carries out the reaction 1-(5-phospho-beta-D-ribosyl)-5'-AMP + H2O = 1-(5-phospho-beta-D-ribosyl)-5-[(5-phospho-beta-D-ribosylamino)methylideneamino]imidazole-4-carboxamide. It functions in the pathway amino-acid biosynthesis; L-histidine biosynthesis; L-histidine from 5-phospho-alpha-D-ribose 1-diphosphate: step 3/9. In terms of biological role, catalyzes the hydrolysis of the adenine ring of phosphoribosyl-AMP. In Paracoccus denitrificans (strain Pd 1222), this protein is Phosphoribosyl-AMP cyclohydrolase.